The primary structure comprises 431 residues: Chaperone SurA (431 aa).

The signal sequence occupies residues 1–20 (MKNWRTLILGLALSASTAFA). PpiC domains lie at 171–272 (NDEL…KVND) and 282–382 (VTET…QLLD).

It is found in the periplasm. The enzyme catalyses [protein]-peptidylproline (omega=180) = [protein]-peptidylproline (omega=0). Chaperone involved in the correct folding and assembly of outer membrane proteins. Recognizes specific patterns of aromatic residues and the orientation of their side chains, which are found more frequently in integral outer membrane proteins. May act in both early periplasmic and late outer membrane-associated steps of protein maturation. In Pectobacterium atrosepticum (strain SCRI 1043 / ATCC BAA-672) (Erwinia carotovora subsp. atroseptica), this protein is Chaperone SurA.